The chain runs to 89 residues: Small ribosomal subunit protein uS15 (89 aa).

Residues 1 to 21 show a composition bias toward basic and acidic residues; it reads MALTTEEKKQVLSEYGLHETD. Residues 1-24 are disordered; that stretch reads MALTTEEKKQVLSEYGLHETDTGS.

The protein belongs to the universal ribosomal protein uS15 family. In terms of assembly, part of the 30S ribosomal subunit. Forms a bridge to the 50S subunit in the 70S ribosome, contacting the 23S rRNA.

In terms of biological role, one of the primary rRNA binding proteins, it binds directly to 16S rRNA where it helps nucleate assembly of the platform of the 30S subunit by binding and bridging several RNA helices of the 16S rRNA. Functionally, forms an intersubunit bridge (bridge B4) with the 23S rRNA of the 50S subunit in the ribosome. This is Small ribosomal subunit protein uS15 from Rhodococcus opacus (strain B4).